The following is a 360-amino-acid chain: Alanine racemase (360 aa).

K33 (proton acceptor; specific for D-alanine) is an active-site residue. K33 is modified (N6-(pyridoxal phosphate)lysine). R129 is a binding site for substrate. The Proton acceptor; specific for L-alanine role is filled by Y253. M301 provides a ligand contact to substrate.

It belongs to the alanine racemase family. Requires pyridoxal 5'-phosphate as cofactor.

The enzyme catalyses L-alanine = D-alanine. The protein operates within amino-acid biosynthesis; D-alanine biosynthesis; D-alanine from L-alanine: step 1/1. In terms of biological role, catalyzes the interconversion of L-alanine and D-alanine. May also act on other amino acids. This Xanthomonas campestris pv. campestris (strain 8004) protein is Alanine racemase (alr).